We begin with the raw amino-acid sequence, 258 residues long: Leucyl/phenylalanyl-tRNA--protein transferase (258 aa).

Belongs to the L/F-transferase family.

It localises to the cytoplasm. It catalyses the reaction N-terminal L-lysyl-[protein] + L-leucyl-tRNA(Leu) = N-terminal L-leucyl-L-lysyl-[protein] + tRNA(Leu) + H(+). The enzyme catalyses N-terminal L-arginyl-[protein] + L-leucyl-tRNA(Leu) = N-terminal L-leucyl-L-arginyl-[protein] + tRNA(Leu) + H(+). The catalysed reaction is L-phenylalanyl-tRNA(Phe) + an N-terminal L-alpha-aminoacyl-[protein] = an N-terminal L-phenylalanyl-L-alpha-aminoacyl-[protein] + tRNA(Phe). Functions in the N-end rule pathway of protein degradation where it conjugates Leu, Phe and, less efficiently, Met from aminoacyl-tRNAs to the N-termini of proteins containing an N-terminal arginine or lysine. The polypeptide is Leucyl/phenylalanyl-tRNA--protein transferase (Alkalilimnicola ehrlichii (strain ATCC BAA-1101 / DSM 17681 / MLHE-1)).